Here is a 463-residue protein sequence, read N- to C-terminus: Annexin A7 (463 aa).

Composition is skewed to pro residues over residues 1–18 (MSYPGYPPTGYPPFPGYP) and 26–38 (FPPPGQYPYPSGF). 2 disordered regions span residues 1 to 54 (MSYP…SSGY) and 71 to 153 (GYPG…THGT). The interval 1–140 (MSYPGYPPTG…QYPGGQSPYP (140 aa)) is repeat-rich region. The tract at residues 5 to 20 (GYPPTGYPPFPGYPPT) is 3 X 5 AA tandem repeats of G-Y-P-P-X. The segment covering 86 to 99 (GGQGFGAPPGGAGF) has biased composition (gly residues). Annexin repeat units follow at residues 160 to 231 (FDAM…ALFM), 232 to 303 (PSTY…SMCQ), 315 to 387 (QLAQ…TILQ), and 391 to 462 (NRPA…AIVG). K208 is subject to N6-acetyllysine.

The protein belongs to the annexin family. Interacts with PDCD6.

Calcium/phospholipid-binding protein which promotes membrane fusion and is involved in exocytosis. This is Annexin A7 (ANXA7) from Bos taurus (Bovine).